We begin with the raw amino-acid sequence, 430 residues long: Cyclin-A2 (430 aa).

At methionine 1 the chain carries N-acetylmethionine. Disordered regions lie at residues 1–80 and 106–129; these read MLGS…PIND and EEIQ…FNSA. Serine 5 is subject to Phosphoserine. The span at 107–120 shows a compositional bias: basic and acidic residues; that stretch reads EIQKRPTESKKSES.

This sequence belongs to the cyclin family. Cyclin AB subfamily. As to quaternary structure, interacts with the CDK1 and CDK2 protein kinases to form serine/threonine kinase holoenzyme complexes. Interacts with CDK1 (hyperphosphorylated form in G1 and underphosphorylated forms in S and G2). Interacts with CDK2; the interaction increases from G1 to G2. Interacts (associated with CDK2 but not with CDK1) with SCAPER; regulates the activity of CCNA2/CDK2 by transiently maintaining CCNA2 in the cytoplasm. Forms a ternary complex with CDK2 and CDKN1B; CDKN1B inhibits the kinase activity of CDK2 through conformational rearrangements. Interacts with INCA1. Post-translationally, polyubiquitinated via 'Lys-11'-linked ubiquitin by the anaphase-promoting complex (APC/C), leading to its degradation by the proteasome. Deubiquitinated and stabilized by USP37 enables entry into S phase. Ubiquitinated during the G1 phase by the SCF(FBXO31) complex, leading to its proteasomal degradation.

The protein localises to the nucleus. Its subcellular location is the cytoplasm. Cyclin which controls both the G1/S and the G2/M transition phases of the cell cycle. Functions through the formation of specific serine/threonine kinase holoenzyme complexes with the cyclin-dependent protein kinases CDK1 and CDK2. The cyclin subunit confers the substrate specificity of these complexes and differentially interacts with and activates CDK1 and CDK2 throughout the cell cycle. The sequence is that of Cyclin-A2 from Bos taurus (Bovine).